Reading from the N-terminus, the 408-residue chain is Peptidase T (408 aa).

His78 provides a ligand contact to Zn(2+). The active site involves Asp80. Residue Asp140 participates in Zn(2+) binding. The active-site Proton acceptor is the Glu173. Positions 174, 196, and 379 each coordinate Zn(2+).

Belongs to the peptidase M20B family. Zn(2+) serves as cofactor.

The protein localises to the cytoplasm. The catalysed reaction is Release of the N-terminal residue from a tripeptide.. Its function is as follows. Cleaves the N-terminal amino acid of tripeptides. In Salmonella arizonae (strain ATCC BAA-731 / CDC346-86 / RSK2980), this protein is Peptidase T.